The chain runs to 556 residues: Phosphoglucomutase (556 aa).

Arg-22 and Ser-114 together coordinate alpha-D-glucose 1,6-bisphosphate. The active-site Phosphoserine intermediate is the Ser-114. Mg(2+) contacts are provided by Ser-114, Asp-279, Asp-281, and Asp-283. Phosphoserine is present on Ser-114. Asp-283, Arg-284, Thr-347, Glu-366, Ser-368, and Lys-379 together coordinate alpha-D-glucose 1,6-bisphosphate.

Belongs to the phosphohexose mutase family. In terms of assembly, monomer. The cofactor is Mg(2+).

It is found in the cytoplasm. The catalysed reaction is alpha-D-glucose 1-phosphate = alpha-D-glucose 6-phosphate. It carries out the reaction O-phospho-L-seryl-[protein] + alpha-D-glucose 1-phosphate = alpha-D-glucose 1,6-bisphosphate + L-seryl-[protein]. The enzyme catalyses alpha-D-glucose 1,6-bisphosphate + L-seryl-[protein] = O-phospho-L-seryl-[protein] + alpha-D-glucose 6-phosphate. Catalyzes the reversible isomerization of alpha-D-glucose 1-phosphate to alpha-D-glucose 6-phosphate. The mechanism proceeds via the intermediate compound alpha-D-glucose 1,6-bisphosphate. Key enzyme in hexose metabolism. The reverse reaction is an essential step for biosynthesis because glucose 1-phosphate is the starting point for the synthesis of UDP-glucose, which acts as a precursor for the synthesis of oligosaccharides and trehalose. The chain is Phosphoglucomutase (pgmB) from Emericella nidulans (strain FGSC A4 / ATCC 38163 / CBS 112.46 / NRRL 194 / M139) (Aspergillus nidulans).